We begin with the raw amino-acid sequence, 299 residues long: 4-hydroxy-tetrahydrodipicolinate synthase (299 aa).

Position 44 (Thr-44) interacts with pyruvate. The Proton donor/acceptor role is filled by Tyr-133. Catalysis depends on Lys-162, which acts as the Schiff-base intermediate with substrate. Ile-204 is a binding site for pyruvate.

Belongs to the DapA family. As to quaternary structure, homotetramer; dimer of dimers.

It localises to the cytoplasm. The enzyme catalyses L-aspartate 4-semialdehyde + pyruvate = (2S,4S)-4-hydroxy-2,3,4,5-tetrahydrodipicolinate + H2O + H(+). The protein operates within amino-acid biosynthesis; L-lysine biosynthesis via DAP pathway; (S)-tetrahydrodipicolinate from L-aspartate: step 3/4. Its function is as follows. Catalyzes the condensation of (S)-aspartate-beta-semialdehyde [(S)-ASA] and pyruvate to 4-hydroxy-tetrahydrodipicolinate (HTPA). This Thermus thermophilus (strain ATCC 27634 / DSM 579 / HB8) protein is 4-hydroxy-tetrahydrodipicolinate synthase.